A 342-amino-acid polypeptide reads, in one-letter code: (Lyso)-N-acylphosphatidylethanolamine lipase (342 aa).

The 255-residue stretch at 70 to 324 (PLVMVHGFGG…IEGASHHVYA (255 aa)) folds into the AB hydrolase-1 domain.

The protein belongs to the peptidase S33 family. ABHD4/ABHD5 subfamily.

It catalyses the reaction N-hexadecanoyl-1,2-di-(9Z-octadecenoyl)-sn-glycero-3-phosphoethanolamine + H2O = N-hexadecanoyl-1-(9Z-octadecenoyl)-sn-glycero-3-phosphoethanolamine + (9Z)-octadecenoate + H(+). The enzyme catalyses an N-acyl-1,2-diacyl-sn-glycero-3-phosphoethanolamine + H2O = N,1-diacyl-sn-glycero-3-phosphoethanolamine + a fatty acid + H(+). It carries out the reaction N-hexadecanoyl-1-(9Z-octadecenoyl)-sn-glycero-3-phosphoethanolamine + H2O = N-hexadecanoyl-sn-glycero-3-phosphoethanolamine + (9Z)-octadecenoate + H(+). The catalysed reaction is N-octadecanoyl-1-(9Z-octadecenoyl)-sn-glycero-3-phosphoethanolamine + H2O = N-octadecanoyl-sn-glycero-3-phospho-ethanolamine + (9Z)-octadecenoate + H(+). It catalyses the reaction N-eicosanoyl-1-(9Z-octadecenoyl)-sn-glycero-3-phosphoethanolamine + H2O = N-eicosanoyl-sn-glycero-3-phosphoethanolamine + (9Z)-octadecenoate + H(+). The enzyme catalyses N,1-di-(9Z-octadecenoyl)-sn-glycero-3-phosphoethanolamine + H2O = N-(9Z-octadecenoyl)-sn-glycero-3-phosphoethanolamine + (9Z)-octadecenoate + H(+). It carries out the reaction N-(5Z,8Z,11Z,14Z-eicosatetraenoyl)-1-(9Z-octadecenoyl)-sn-glycero-3-phosphoethanolamine + H2O = N-(5Z,8Z,11Z,14Z-eicosatetraenoyl)-sn-glycero-3-phosphoethanolamine + (9Z)-octadecenoate + H(+). The catalysed reaction is 1-octadecanoyl-2-(9Z-octadecenoyl)-sn-glycero-3-phospho-(N-hexadecanoyl)-serine + H2O = 1-octadecanoyl-2-hydroxy-sn-glycero-3-phospho-(N-hexadecanoyl)-serine + (9Z)-octadecenoate + H(+). It catalyses the reaction 1-O-(1Z-octadecenoyl)-2-(9Z-octadecenoyl)-sn-glycero-3-phospho-N-hexadecanoyl-ethanolamine + H2O = 1-O-(1Z-octadecenyl)-sn-glycero-3-phospho-N-hexadecanoyl-ethanolamine + (9Z)-octadecenoate + H(+). The enzyme catalyses N,1-diacyl-sn-glycero-3-phosphoethanolamine + H2O = N-acyl-sn-glycero-3-phosphoethanolamine + a fatty acid + H(+). Its function is as follows. Lysophospholipase selective for N-acyl phosphatidylethanolamine (NAPE). Contributes to the biosynthesis of N-acyl ethanolamines, including the endocannabinoid anandamide by hydrolyzing the sn-1 and sn-2 acyl chains from N-acyl phosphatidylethanolamine (NAPE) generating glycerophospho-N-acyl ethanolamine (GP-NAE), an intermediate for N-acyl ethanolamine biosynthesis. Hydrolyzes substrates bearing saturated, monounsaturated, polyunsaturated N-acyl chains. Shows no significant activity towards other lysophospholipids, including lysophosphatidylcholine, lysophosphatidylethanolamine and lysophosphatidylserine. The chain is (Lyso)-N-acylphosphatidylethanolamine lipase from Bos taurus (Bovine).